The primary structure comprises 289 residues: Prepilin leader peptidase/N-methyltransferase (289 aa).

Residues A13 to I33 form a helical membrane-spanning segment. Zn(2+) contacts are provided by C72, C75, C97, and C100. The next 5 membrane-spanning stretches (helical) occupy residues F128 to I148, L159 to L179, L183 to V203, V228 to L248, and G256 to G276.

It belongs to the peptidase A24 family. Zn(2+) is required as a cofactor.

It is found in the cell inner membrane. It catalyses the reaction Typically cleaves a -Gly-|-Phe- bond to release an N-terminal, basic peptide of 5-8 residues from type IV prepilin, and then N-methylates the new N-terminal amino group, the methyl donor being S-adenosyl-L-methionine.. Functionally, plays an essential role in type IV pili and type II pseudopili formation by proteolytically removing the leader sequence from substrate proteins and subsequently monomethylating the alpha-amino group of the newly exposed N-terminal phenylalanine. This chain is Prepilin leader peptidase/N-methyltransferase (pilD), found in Stutzerimonas stutzeri (Pseudomonas stutzeri).